We begin with the raw amino-acid sequence, 469 residues long: Aspartyl/glutamyl-tRNA(Asn/Gln) amidotransferase subunit B (469 aa).

The protein belongs to the GatB/GatE family. GatB subfamily. Heterotrimer of A, B and C subunits.

It carries out the reaction L-glutamyl-tRNA(Gln) + L-glutamine + ATP + H2O = L-glutaminyl-tRNA(Gln) + L-glutamate + ADP + phosphate + H(+). The catalysed reaction is L-aspartyl-tRNA(Asn) + L-glutamine + ATP + H2O = L-asparaginyl-tRNA(Asn) + L-glutamate + ADP + phosphate + 2 H(+). Allows the formation of correctly charged Asn-tRNA(Asn) or Gln-tRNA(Gln) through the transamidation of misacylated Asp-tRNA(Asn) or Glu-tRNA(Gln) in organisms which lack either or both of asparaginyl-tRNA or glutaminyl-tRNA synthetases. The reaction takes place in the presence of glutamine and ATP through an activated phospho-Asp-tRNA(Asn) or phospho-Glu-tRNA(Gln). This Methanococcus maripaludis (strain C5 / ATCC BAA-1333) protein is Aspartyl/glutamyl-tRNA(Asn/Gln) amidotransferase subunit B.